Here is a 212-residue protein sequence, read N- to C-terminus: Large ribosomal subunit protein bL25 (212 aa).

This sequence belongs to the bacterial ribosomal protein bL25 family. CTC subfamily. As to quaternary structure, part of the 50S ribosomal subunit; part of the 5S rRNA/L5/L18/L25 subcomplex. Contacts the 5S rRNA. Binds to the 5S rRNA independently of L5 and L18.

Its function is as follows. This is one of the proteins that binds to the 5S RNA in the ribosome where it forms part of the central protuberance. This Leptospira interrogans serogroup Icterohaemorrhagiae serovar copenhageni (strain Fiocruz L1-130) protein is Large ribosomal subunit protein bL25.